Here is a 341-residue protein sequence, read N- to C-terminus: MNVKDFDFYLPEELIAQHPLEQRDSSRLMVLDKKTGEIKHKKFHDIIEYLNEGDTLVLNNTRVMPARLIGEKEGTGGKIEFLLLKRIEKDRWECLAKPGKSAKVGRKFTFGEGKLKAEVVEVEENGNRIVEFFYDGIFEEVLDSLGEMPLPPYIHERLEDRERYQTVYSKENGSAAAPTAGLHFTKELLQEIKNKGINIVYLTLHVGLGTFRPVKVESLEEHEMHSEFYMLSKESADIINETKKRGNAVISVGTTSTRTLETIGDENGFVKEQSGWTNIFIYPGYKFKVVDKLITNFHLPESTLIMLVSTLAGRENVMNAYEEAVNEKYRFFSFGDAMFIK.

It belongs to the QueA family. In terms of assembly, monomer.

Its subcellular location is the cytoplasm. The enzyme catalyses 7-aminomethyl-7-carbaguanosine(34) in tRNA + S-adenosyl-L-methionine = epoxyqueuosine(34) in tRNA + adenine + L-methionine + 2 H(+). Its pathway is tRNA modification; tRNA-queuosine biosynthesis. Transfers and isomerizes the ribose moiety from AdoMet to the 7-aminomethyl group of 7-deazaguanine (preQ1-tRNA) to give epoxyqueuosine (oQ-tRNA). This chain is S-adenosylmethionine:tRNA ribosyltransferase-isomerase, found in Clostridium beijerinckii (strain ATCC 51743 / NCIMB 8052) (Clostridium acetobutylicum).